The following is a 153-amino-acid chain: Aspartate carbamoyltransferase regulatory chain (153 aa).

Zn(2+)-binding residues include Cys-109, Cys-114, Cys-138, and Cys-141.

Belongs to the PyrI family. As to quaternary structure, contains catalytic and regulatory chains. Requires Zn(2+) as cofactor.

Involved in allosteric regulation of aspartate carbamoyltransferase. The polypeptide is Aspartate carbamoyltransferase regulatory chain (Salmonella schwarzengrund (strain CVM19633)).